We begin with the raw amino-acid sequence, 65 residues long: Large ribosomal subunit protein uL29 (65 aa).

It belongs to the universal ribosomal protein uL29 family.

In Buchnera aphidicola subsp. Schizaphis graminum (strain Sg), this protein is Large ribosomal subunit protein uL29.